Consider the following 1083-residue polypeptide: Kinesin-like protein klp-19 (1083 aa).

The Kinesin motor domain maps to 6–328; sequence SLRVVVRARP…LRYADRAKQI (323 aa). Residue 85-92 participates in ATP binding; the sequence is GQTGSGKT. A coiled-coil region spans residues 408–435; the sequence is MSALTQKNSRLEEDKAKLQSMLTDVRNT. Acidic residues predominate over residues 458–471; sequence TEESTTLADDDNDE. Residues 458 to 479 are disordered; that stretch reads TEESTTLADDDNDETALGGQDD. A coiled-coil region spans residues 487–650; it reads LPELQAELDD…KSKLQKREND (164 aa). A compositionally biased stretch (polar residues) spans 1044–1055; the sequence is DDSQPSPSNSTF. The disordered stretch occupies residues 1044-1083; sequence DDSQPSPSNSTFVIGAAPTSEADGVPPIKRKSRRTDLGPL.

The protein belongs to the TRAFAC class myosin-kinesin ATPase superfamily. Kinesin family. As to expression, expressed in the gonad.

It localises to the nucleus. The protein resides in the nucleoplasm. The protein localises to the cytoplasm. Its subcellular location is the cytoskeleton. It is found in the spindle. It localises to the chromosome. Functionally, required for chromosome movement and orientation on spindle poles in mitosis and meiosis. May play a role in early anterior-posterior chromosome movement in mitotic embryos. This is Kinesin-like protein klp-19 from Caenorhabditis elegans.